The sequence spans 83 residues: U20-theraphotoxin-Cg1a 1 (83 aa).

Positions 1–21 (MKVSVLITLAVLGVMFVWTSA) are cleaved as a signal peptide. Residues 22 to 47 (AELEERGSDQPAWLKSLERIFQSEER) constitute a propeptide that is removed on maturation. Cystine bridges form between cysteine 49–cysteine 63, cysteine 56–cysteine 68, and cysteine 62–cysteine 76.

Belongs to the neurotoxin 10 (Hwtx-1) family. 40 (Jztx-35) subfamily. Expressed by the venom gland.

It is found in the secreted. Probable ion channel inhibitor. The chain is U20-theraphotoxin-Cg1a 1 from Chilobrachys guangxiensis (Chinese earth tiger tarantula).